Here is a 241-residue protein sequence, read N- to C-terminus: Diacetyl reductase [(S)-acetoin forming] (241 aa).

An NAD(+)-binding site is contributed by 6–30 (LVTGAGQGIGKAIALRLVKDGFAVA). Ser-139 contacts substrate. The active-site Proton acceptor is Tyr-152. The active site involves Lys-156.

Belongs to the short-chain dehydrogenases/reductases (SDR) family. As to quaternary structure, homotetramer.

It carries out the reaction (S)-acetoin + NAD(+) = diacetyl + NADH + H(+). Its function is as follows. Catalyzes the irreversible reduction of 2,3-butanediol to (S)-acetoin in the presence of NADH. This is Diacetyl reductase [(S)-acetoin forming] (budC) from Raoultella terrigena (Klebsiella terrigena).